A 453-amino-acid chain; its full sequence is Zinc finger and BTB domain-containing protein 44 (453 aa).

Lysine 4 is covalently cross-linked (Glycyl lysine isopeptide (Lys-Gly) (interchain with G-Cter in SUMO2)). The BTB domain occupies cysteine 31 to threonine 98. 7 positions are modified to phosphoserine: serine 135, serine 159, serine 161, serine 165, serine 191, serine 194, and serine 199. Threonine 200 bears the Phosphothreonine mark. Positions glutamine 241–arginine 265 are disordered. Residue lysine 290 forms a Glycyl lysine isopeptide (Lys-Gly) (interchain with G-Cter in SUMO2) linkage. Disordered stretches follow at residues serine 295–glutamate 324 and serine 336–arginine 368. The segment covering serine 304–glutamine 318 has biased composition (low complexity). A compositionally biased stretch (polar residues) spans threonine 352–alanine 361. 2 C2H2-type zinc fingers span residues phenylalanine 399–histidine 421 and phenylalanine 427–histidine 449.

Its subcellular location is the nucleus. This Rattus norvegicus (Rat) protein is Zinc finger and BTB domain-containing protein 44 (Zbtb44).